The sequence spans 96 residues: UPF0235 protein Pfl01_5322 (96 aa).

The protein belongs to the UPF0235 family.

This is UPF0235 protein Pfl01_5322 from Pseudomonas fluorescens (strain Pf0-1).